The following is a 603-amino-acid chain: Coagulation factor XII (603 aa).

A signal peptide spans 1–18; that stretch reads GRLLLGSLLVSLESALSA. The Fibronectin type-II domain occupies 41 to 89; it reads VTGEPCYFPFQYNRQLYHHCIHKGRPGPRPWCATTPNFDQDQQWAYCLE. Intrachain disulfides connect cysteine 46–cysteine 72, cysteine 60–cysteine 87, cysteine 97–cysteine 109, cysteine 103–cysteine 118, cysteine 120–cysteine 129, cysteine 134–cysteine 162, cysteine 160–cysteine 169, cysteine 177–cysteine 188, cysteine 182–cysteine 197, cysteine 199–cysteine 208, cysteine 216–cysteine 294, cysteine 237–cysteine 276, cysteine 265–cysteine 289, cysteine 345–cysteine 472, cysteine 383–cysteine 399, cysteine 391–cysteine 461, cysteine 422–cysteine 425, cysteine 488–cysteine 557, cysteine 520–cysteine 536, and cysteine 547–cysteine 578. The region spanning 93-130 is the EGF-like 1 domain; that stretch reads VKDHCSKHNPCQRGGICVNTLSSPHCLCPDHLTGKHCQ. In terms of domain architecture, Fibronectin type-I spans 132–172; it reads EKCFEPQLHRFFHENEIWFRTGPAGVAKCHCKGPDAHCKQM. Residues 173 to 209 form the EGF-like 2 domain; the sequence is HSQECQTNPCLNGGRCLEVEGHHLCDCPMGYTGPFCD. Residues 216–294 form the Kringle domain; that stretch reads CYEGRGVSYR…SWEYCDLAQC (79 aa). N-linked (GlcNAc...) asparagine glycans are attached at residues asparagine 248 and asparagine 270. One can recognise a Peptidase S1 domain in the interval 359-602; sequence IVGGLVALPG…YLTWIQKHTA (244 aa). Histidine 398 functions as the Charge relay system in the catalytic mechanism. N-linked (GlcNAc...) asparagine glycosylation is present at asparagine 419. The active-site Charge relay system is aspartate 447. The Charge relay system role is filled by serine 551.

Belongs to the peptidase S1 family. In terms of assembly, interacts with HRG; the interaction, which is enhanced in the presence of zinc ions and inhibited by heparin-binding, inhibits factor XII autoactivation and contact-initiated coagulation. O- and N-glycosylated.

Its subcellular location is the secreted. The catalysed reaction is Selective cleavage of Arg-|-Ile bonds in factor VII to form factor VIIa and factor XI to form factor XIa.. Its activity is regulated as follows. Activity is promoted in the presence of negatively charged surfaces. Its function is as follows. Factor XII is a serum glycoprotein that participates in the initiation of blood coagulation, fibrinolysis, and the generation of bradykinin and angiotensin. Prekallikrein is cleaved by factor XII to form kallikrein, which then cleaves factor XII first to alpha-factor XIIa and then trypsin cleaves it to beta-factor XIIa. Alpha-factor XIIa activates factor XI to factor XIa. This chain is Coagulation factor XII (F12), found in Cavia porcellus (Guinea pig).